We begin with the raw amino-acid sequence, 228 residues long: L-ribulose-5-phosphate 4-epimerase UlaF (228 aa).

Residues 26-27 (GN), 43-44 (SG), and 72-73 (SS) contribute to the substrate site. Zn(2+) contacts are provided by aspartate 74, histidine 93, and histidine 95. The Proton donor/acceptor role is filled by aspartate 118. A Zn(2+)-binding site is contributed by histidine 167. The Proton donor/acceptor role is filled by tyrosine 225.

Belongs to the aldolase class II family. AraD/FucA subfamily. Zn(2+) serves as cofactor.

The catalysed reaction is L-ribulose 5-phosphate = D-xylulose 5-phosphate. The protein operates within cofactor degradation; L-ascorbate degradation; D-xylulose 5-phosphate from L-ascorbate: step 4/4. Catalyzes the isomerization of L-ribulose 5-phosphate to D-xylulose 5-phosphate. Is involved in the anaerobic L-ascorbate utilization. This Escherichia coli O81 (strain ED1a) protein is L-ribulose-5-phosphate 4-epimerase UlaF.